A 1794-amino-acid polypeptide reads, in one-letter code: Protein TIC 214 (1794 aa).

6 helical membrane passes run 23-43 (VVVG…SYLF), 64-84 (FIMG…HLAL), 87-107 (PHTI…WNNH), 124-144 (LSIQ…HFIL), 172-192 (VGWL…LFWI), and 218-238 (ILSI…PSPI). The tract at residues 244–307 (KETSETGETE…REGVNGKEKT (64 aa)) is disordered. Positions 248–258 (ETGETEEETDV) are enriched in acidic residues. Basic and acidic residues-rich tracts occupy residues 259–276 (EIER…KEGS) and 286–307 (SEEK…KEKT).

This sequence belongs to the TIC214 family. In terms of assembly, part of the Tic complex.

It localises to the plastid. Its subcellular location is the chloroplast inner membrane. Functionally, involved in protein precursor import into chloroplasts. May be part of an intermediate translocation complex acting as a protein-conducting channel at the inner envelope. This chain is Protein TIC 214, found in Amborella trichopoda.